Consider the following 161-residue polypeptide: Nucleotide-binding protein Gbem_0619 (161 aa).

This sequence belongs to the YajQ family.

Nucleotide-binding protein. In Citrifermentans bemidjiense (strain ATCC BAA-1014 / DSM 16622 / JCM 12645 / Bem) (Geobacter bemidjiensis), this protein is Nucleotide-binding protein Gbem_0619.